A 403-amino-acid polypeptide reads, in one-letter code: S-adenosylmethionine synthase (403 aa).

Residue His-16 coordinates ATP. Position 18 (Asp-18) interacts with Mg(2+). Glu-44 contributes to the K(+) binding site. L-methionine contacts are provided by Glu-57 and Gln-100. A flexible loop region spans residues 100 to 110 (QSPDIAQGVDR). Residues 106 to 126 (QGVDRSYESRSGSASTDAHDL) are disordered. ATP is bound by residues 176–178 (DGK), 248–249 (KF), Asp-257, 263–264 (RK), Ala-280, and Lys-284. Residue Asp-257 coordinates L-methionine. Residue Lys-288 coordinates L-methionine.

The protein belongs to the AdoMet synthase family. In terms of assembly, homotetramer; dimer of dimers. The cofactor is Mg(2+). It depends on K(+) as a cofactor.

It is found in the cytoplasm. The enzyme catalyses L-methionine + ATP + H2O = S-adenosyl-L-methionine + phosphate + diphosphate. It participates in amino-acid biosynthesis; S-adenosyl-L-methionine biosynthesis; S-adenosyl-L-methionine from L-methionine: step 1/1. Catalyzes the formation of S-adenosylmethionine (AdoMet) from methionine and ATP. The overall synthetic reaction is composed of two sequential steps, AdoMet formation and the subsequent tripolyphosphate hydrolysis which occurs prior to release of AdoMet from the enzyme. This chain is S-adenosylmethionine synthase, found in Clavibacter sepedonicus (Clavibacter michiganensis subsp. sepedonicus).